The primary structure comprises 107 residues: Putative double-stranded DNA mimic protein CGSHiGG_01135 (107 aa).

The protein belongs to the putative dsDNA mimic protein family.

Its function is as follows. May act as a double-stranded DNA (dsDNA) mimic. Probably regulates the activity of a dsDNA-binding protein. The protein is Putative double-stranded DNA mimic protein CGSHiGG_01135 of Haemophilus influenzae (strain PittGG).